The following is a 664-amino-acid chain: Transketolase 1 (664 aa).

Residue histidine 26 coordinates substrate. Thiamine diphosphate contacts are provided by residues histidine 66 and 114–116 (GPL). Residue aspartate 155 coordinates Mg(2+). 2 residues coordinate thiamine diphosphate: glycine 156 and asparagine 185. Residues asparagine 185 and isoleucine 187 each coordinate Mg(2+). Substrate contacts are provided by histidine 260, arginine 357, and serine 384. Histidine 260 provides a ligand contact to thiamine diphosphate. The active-site Proton donor is the glutamate 411. Residue phenylalanine 437 coordinates thiamine diphosphate. Substrate is bound by residues histidine 461, aspartate 469, and arginine 520.

It belongs to the transketolase family. In terms of assembly, homodimer. Requires Mg(2+) as cofactor. It depends on Ca(2+) as a cofactor. Mn(2+) is required as a cofactor. The cofactor is Co(2+). Thiamine diphosphate serves as cofactor.

It catalyses the reaction D-sedoheptulose 7-phosphate + D-glyceraldehyde 3-phosphate = aldehydo-D-ribose 5-phosphate + D-xylulose 5-phosphate. Catalyzes the transfer of a two-carbon ketol group from a ketose donor to an aldose acceptor, via a covalent intermediate with the cofactor thiamine pyrophosphate. The sequence is that of Transketolase 1 (tkt1) from Vibrio parahaemolyticus serotype O3:K6 (strain RIMD 2210633).